Here is a 161-residue protein sequence, read N- to C-terminus: S-protein homolog 2 (161 aa).

The first 24 residues, 1-24 (MDIPKQYLSLFILIIFITTKLSQA), serve as a signal peptide directing secretion. 3 N-linked (GlcNAc...) asparagine glycosylation sites follow: N75, N106, and N157.

It belongs to the plant self-incompatibility (S1) protein family.

It localises to the secreted. In Arabidopsis thaliana (Mouse-ear cress), this protein is S-protein homolog 2.